We begin with the raw amino-acid sequence, 370 residues long: Histidinol-phosphate aminotransferase (370 aa).

At Lys231 the chain carries N6-(pyridoxal phosphate)lysine.

This sequence belongs to the class-II pyridoxal-phosphate-dependent aminotransferase family. Histidinol-phosphate aminotransferase subfamily. In terms of assembly, homodimer. Pyridoxal 5'-phosphate is required as a cofactor.

It catalyses the reaction L-histidinol phosphate + 2-oxoglutarate = 3-(imidazol-4-yl)-2-oxopropyl phosphate + L-glutamate. It participates in amino-acid biosynthesis; L-histidine biosynthesis; L-histidine from 5-phospho-alpha-D-ribose 1-diphosphate: step 7/9. The protein is Histidinol-phosphate aminotransferase of Paracidovorax citrulli (strain AAC00-1) (Acidovorax citrulli).